The following is a 125-amino-acid chain: U-scoloptoxin(05)-Sm1a (125 aa).

Positions M1–A20 are cleaved as a signal peptide.

It belongs to the scoloptoxin-05 family. Post-translationally, contains 4 disulfide bonds. As to expression, expressed by the venom gland.

The protein localises to the secreted. The protein is U-scoloptoxin(05)-Sm1a of Scolopendra morsitans (Tanzanian blue ringleg centipede).